Consider the following 282-residue polypeptide: MISMNPIMIRNNLSRSSSPAAPPTTNHSSTVDYFSIKPKLSLDTNSQSDSNSTQSNNNEDTHSEQSDYNSYTHNQYYDSDDDEDDFDIRDQLLDPFDKITLSNCNEEYYSPLTPFDGQTTSPQDSIISSKSSNKSTTVVPSPQFQLTLPKLTTYSFLIVDDNIINLKILNRILLKLFPKCHIVQIQDSKLVKDLLHKQSFDSIFIDIEMPDVNGIDIAQFVRQDTKFDNMGMVAVTTRNSTQDLELFKQCGIDFTFHKPLNYSLDFMANSIDDIIITRKNKI.

Composition is skewed to low complexity over residues Asn-12–Thr-30 and Ser-41–Asn-58. 3 disordered regions span residues Asn-12 to Val-31, Ser-41 to Asp-84, and Leu-112 to Val-139. Residues Ser-66–Tyr-77 show a composition bias toward polar residues. Residues Ser-125–Val-139 are compositionally biased toward low complexity. The region spanning Ser-155 to Asp-273 is the Response regulatory domain. Residue Asp-206 is modified to 4-aspartylphosphate.

Functionally, required for stress adaptation, morphogenesis and virulence. The sequence is that of Stress response regulator protein 1 (SRR1) from Candida albicans (strain WO-1) (Yeast).